The sequence spans 236 residues: MTDVTTSTENELRELAERGAAELADASAEELLRWTDEHFGGNYVVASNMQDAVLVEMAAKVRPGVDVLFLDTGYHFAETIGTRDAVEAVYDVHVVNVTPERTVAEQDELLGKNLFARDPGECCRLRKVVPLTNALKGYSAWVTGIRRVEAPTRANAPLISWDNAFGLVKINPIAAWTDEDMQNYIDANGILVNPLVYEGYPSIGCAPCTSKPIPGADPRSGRWAGLSKTECGLHVS.

4 residues coordinate [4Fe-4S] cluster: Cys122, Cys123, Cys205, and Cys208. Catalysis depends on Cys231, which acts as the Nucleophile; cysteine thiosulfonate intermediate.

This sequence belongs to the PAPS reductase family. CysH subfamily. [4Fe-4S] cluster serves as cofactor.

Its subcellular location is the cytoplasm. It catalyses the reaction [thioredoxin]-disulfide + sulfite + AMP + 2 H(+) = adenosine 5'-phosphosulfate + [thioredoxin]-dithiol. It participates in sulfur metabolism; hydrogen sulfide biosynthesis; sulfite from sulfate. Its function is as follows. Catalyzes the formation of sulfite from adenosine 5'-phosphosulfate (APS) using thioredoxin as an electron donor. The protein is Adenosine 5'-phosphosulfate reductase of Mycolicibacterium smegmatis (strain ATCC 700084 / mc(2)155) (Mycobacterium smegmatis).